We begin with the raw amino-acid sequence, 244 residues long: tRNA (guanine-N(7)-)-methyltransferase (244 aa).

Polar residues predominate over residues 1–10 (MSDTPQSPAQ). Positions 1–20 (MSDTPQSPAQDSLAEHDEAR) are disordered. E74, E99, D126, and D149 together coordinate S-adenosyl-L-methionine. The active site involves D149. Substrate-binding positions include K153, D185, and 222–225 (TKFE).

The protein belongs to the class I-like SAM-binding methyltransferase superfamily. TrmB family.

The catalysed reaction is guanosine(46) in tRNA + S-adenosyl-L-methionine = N(7)-methylguanosine(46) in tRNA + S-adenosyl-L-homocysteine. It participates in tRNA modification; N(7)-methylguanine-tRNA biosynthesis. In terms of biological role, catalyzes the formation of N(7)-methylguanine at position 46 (m7G46) in tRNA. The polypeptide is tRNA (guanine-N(7)-)-methyltransferase (Pseudomonas aeruginosa (strain ATCC 15692 / DSM 22644 / CIP 104116 / JCM 14847 / LMG 12228 / 1C / PRS 101 / PAO1)).